Reading from the N-terminus, the 168-residue chain is Photosystem I assembly protein Ycf3 (168 aa).

TPR repeat units follow at residues 35–68, 72–105, and 120–153; these read AFAY…EMDP, SYIL…NPFL, and GEQA…TPDN.

It belongs to the Ycf3 family.

Its subcellular location is the plastid membrane. Functionally, essential for the assembly of the photosystem I (PSI) complex. May act as a chaperone-like factor to guide the assembly of the PSI subunits. The sequence is that of Photosystem I assembly protein Ycf3 from Cuscuta obtusiflora (Peruvian dodder).